The chain runs to 146 residues: Putative serine protease inhibitor SAV_2156 (146 aa).

Residues 1–26 (MTKTTMAVPGALLAAIALLSAAPAQA) form the signal peptide. Disulfide bonds link Cys57-Cys70 and Cys90-Cys120.

It belongs to the protease inhibitor I16 (SSI) family.

It localises to the secreted. This Streptomyces avermitilis (strain ATCC 31267 / DSM 46492 / JCM 5070 / NBRC 14893 / NCIMB 12804 / NRRL 8165 / MA-4680) protein is Putative serine protease inhibitor SAV_2156.